A 288-amino-acid chain; its full sequence is Extracellular ribonuclease (288 aa).

A signal peptide spans 1–26 (MTKKAWFLPLVCVLLISGWLAPAASA).

The protein resides in the secreted. Functionally, mg(2+)-activated ribonuclease which hydrolyzes RNA apparently nonspecifically into oligonucleotides with 5'-terminal phosphate. The sequence is that of Extracellular ribonuclease (bsn) from Bacillus subtilis (strain 168).